A 550-amino-acid polypeptide reads, in one-letter code: DNA mismatch repair protein MutL (550 aa).

Belongs to the DNA mismatch repair MutL/HexB family.

Functionally, this protein is involved in the repair of mismatches in DNA. It is required for dam-dependent methyl-directed DNA mismatch repair. May act as a 'molecular matchmaker', a protein that promotes the formation of a stable complex between two or more DNA-binding proteins in an ATP-dependent manner without itself being part of a final effector complex. The protein is DNA mismatch repair protein MutL of Microcystis aeruginosa (strain NIES-843 / IAM M-2473).